Consider the following 66-residue polypeptide: Beta-toxin Cll1m (66 aa).

Positions 1–66 (KEGYIVNLST…VWPLPKKTCT (66 aa)) constitute an LCN-type CS-alpha/beta domain. Cystine bridges form between Cys-12-Cys-65, Cys-16-Cys-41, Cys-25-Cys-46, and Cys-29-Cys-48. A Threonine amide modification is found at Thr-66.

The protein belongs to the long (4 C-C) scorpion toxin superfamily. Sodium channel inhibitor family. Beta subfamily. As to expression, expressed by the venom gland.

Its subcellular location is the secreted. In terms of biological role, beta toxins bind voltage-independently at site-4 of sodium channels (Nav) and shift the voltage of activation toward more negative potentials thereby affecting sodium channel activation and promoting spontaneous and repetitive firing. The protein is Beta-toxin Cll1m of Centruroides limpidus (Mexican scorpion).